Consider the following 347-residue polypeptide: MSRRGPEEEACGVWLDAAALKRQKMQTHLLKLGTKMLTLLPGERKPSIPFTQRRATRQTSITSFVTSQPGMANGGNQKNASSLKENQINRECKSRSQLDCLDQGLEDDCLVSPLATSTPADIREAGHSPQSSQISGCQSLETTSLTMMSFPQPVVLMGTGESKAPLASSFTQFLERSCLLDQREAKRKREGLCGSKTDCPGMGSHIRPPGGKCHQPLDKAKVEKRATAKENRQAPVHLQTYRFGSHSGKKTLLVTKSPCPLSVFSWDIDRKDRDSWSQLFTEDSQGHQVIAHSTKMPFQDVTNARNQGSGQFPDSPQAQGQDGPTLLHLQPHLLFTQDSEGNRVIRH.

An interaction with AURKA region spans residues 182 to 347 (QREAKRKREG…DSEGNRVIRH (166 aa)). The segment at 273–347 (RDSWSQLFTE…DSEGNRVIRH (75 aa)) is interaction with RBBP8/CtIP. Ser-284 is subject to Phosphoserine. The span at 301-322 (VTNARNQGSGQFPDSPQAQGQD) shows a compositional bias: polar residues. A disordered region spans residues 301-325 (VTNARNQGSGQFPDSPQAQGQDGPT).

Belongs to the AUNIP family. As to quaternary structure, interacts (via C-terminus) with AURKA (via C-terminus). Interacts (via N-terminus) with NIN; this interaction blocks NIN phosphorylation by both AURKA and GSK3B. Identified in a complex with NIN and AURKA. Interacts with RBBP8/CtIP.

The protein resides in the nucleus. The protein localises to the chromosome. It is found in the cytoplasm. It localises to the cytoskeleton. Its subcellular location is the microtubule organizing center. The protein resides in the centrosome. The protein localises to the spindle pole. Functionally, DNA-binding protein that accumulates at DNA double-strand breaks (DSBs) following DNA damage and promotes DNA resection and homologous recombination. Serves as a sensor of DNA damage: binds DNA with a strong preference for DNA substrates that mimic structures generated at stalled replication forks, and anchors RBBP8/CtIP to DSB sites to promote DNA end resection and ensuing homologous recombination repair. Inhibits non-homologous end joining (NHEJ). Required for the dynamic movement of AURKA at the centrosomes and spindle apparatus during the cell cycle. The protein is Aurora kinase A- and ninein-interacting protein of Rattus norvegicus (Rat).